The following is a 407-amino-acid chain: MRGGLWQVGQSITRRLGQSDKKTIVRRWYASEADLKKTVLYDFHVANGGKMVPFAGWSMPIQYKDSIMESTINCRENGSLFDVSHMCGLSLKGKDCVAFLEKLVVADVAGLAPGTGSLTVFTNEKGGAIDDSVITKVTDDHIYLVVNAGCRDKDLAHIEQHMKAFKAKGGDVSWHIHDERSLLALQGPLAGSTLQHLTKDDLSKMYFGDFRIIDISGSKCFLTRTGYTGEDGFEISVPSENAVDLAKAILEKSEGKVRLTGLGARDSLRLEAGLCLYGNDMEQHITPVEAGLTWAIGKRRRAEGGFLGAEVILKQIADGPAIRRVGLFSTGPPARSHSEIQNEQGENIGEVTSGGFSPCLKKNIGMGYVKSGLHKPGTKLKIVIRGKTYEGSVTKMPFVPTKYYKPA.

The transit peptide at 1–29 (MRGGLWQVGQSITRRLGQSDKKTIVRRWY) directs the protein to the mitochondrion. Substrate contacts are provided by Glu-234, Arg-265, and Tyr-403.

This sequence belongs to the GcvT family. The glycine cleavage system is composed of four proteins: P, T, L and H.

Its subcellular location is the mitochondrion. The enzyme catalyses N(6)-[(R)-S(8)-aminomethyldihydrolipoyl]-L-lysyl-[protein] + (6S)-5,6,7,8-tetrahydrofolate = N(6)-[(R)-dihydrolipoyl]-L-lysyl-[protein] + (6R)-5,10-methylene-5,6,7,8-tetrahydrofolate + NH4(+). Its function is as follows. The glycine cleavage system catalyzes the degradation of glycine. In Flaveria trinervia (Clustered yellowtops), this protein is Aminomethyltransferase, mitochondrial (GDCST).